A 252-amino-acid polypeptide reads, in one-letter code: Neurotrophic factor BDNF precursor form (252 aa).

An N-terminal signal peptide occupies residues 1-18; that stretch reads MTILFLTMVISYFGCMKA. A propeptide spanning residues 19–133 is cleaved from the precursor; the sequence is APMKEANVRG…AANMSMRVRR (115 aa). The segment at 43–62 is disordered; the sequence is LESVNGPKAGSRGLTSSSSS. A glycan (N-linked (GlcNAc...) asparagine) is linked at N126. Intrachain disulfides connect C146-C213, C191-C242, and C201-C244.

It belongs to the NGF-beta family. Monomers and homodimers. Binds to NTRK2/TRKB. Can form heterodimers with other neurotrophin family members, such as NTF3 and NTF4 (in vitro), but the physiological relevance of this is not clear. BDNF precursor form: interacts with the heterodimer formed by NGFR and SORCS2. Mature BDNF has much lower affinity for the heterodimer formed by NGFR and SORCS2. In terms of processing, N-glycosylated and glycosulfated, contrary to mature BDNF. Mature BDNF is produced by proteolytic removal of the propeptide, catalyzed by a FURIN family member. In addition, the precursor form is proteolytically cleaved within the propeptide, but this is not an obligatory intermediate for the production of mature BDNF. Can be converted into mature BDNF by plasmin (PLG). Brain and central nervous system.

The protein resides in the secreted. Important signaling molecule that activates signaling cascades downstream of NTRK2. During development, promotes the survival and differentiation of selected neuronal populations of the peripheral and central nervous systems. Participates in axonal growth, pathfinding and in the modulation of dendritic growth and morphology. Major regulator of synaptic transmission and plasticity at adult synapses in many regions of the CNS. The versatility of BDNF is emphasized by its contribution to a range of adaptive neuronal responses including long-term potentiation (LTP), long-term depression (LTD), certain forms of short-term synaptic plasticity, as well as homeostatic regulation of intrinsic neuronal excitability. In terms of biological role, important signaling molecule that activates signaling cascades downstream of NTRK2. Activates signaling cascades via the heterodimeric receptor formed by NGFR and SORCS2. Signaling via NGFR and SORCS2 plays a role in synaptic plasticity and long-term depression (LTD). Binding to NGFR and SORCS2 promotes neuronal apoptosis. Promotes neuronal growth cone collapse. The polypeptide is Neurotrophic factor BDNF precursor form (BDNF) (Sus scrofa (Pig)).